Here is a 303-residue protein sequence, read N- to C-terminus: MQRPGPFSTLYGRVLAPLPGRAGGAASGGGGNNWGLSGSHVQLPGRAHSETRGDKGGSSAGGPAPSTMSKAEEAKKLASHTAVENHVKNNQVLGIGSGSTIVHAVQRIAERVKQENLDLICIPTSFQARQLILQYGLTLSDLDQHPEIDLAIDGADEVDAELNLIKGGGGCLTQEKIVAGYASRFIVIADFRKDSKNLGDRWHKGIPIEVIPMAYVPVSRAVAQKFGGEVELRMAVNKAGPVVTDNGNFILDWKFDRVHKWSEVNTAIKMTPGVVDTGLFINMAERVYFGMQDGSVNVREKPF.

Gly residues predominate over residues 22–33 (AGGAASGGGGNN). The interval 22 to 75 (AGGAASGGGGNNWGLSGSHVQLPGRAHSETRGDKGGSSAGGPAPSTMSKAEEAK) is disordered. Arg-52 is subject to Omega-N-methylarginine. Ser-99 carries the post-translational modification Phosphoserine.

This sequence belongs to the ribose 5-phosphate isomerase family. As to expression, widely expressed, with highest levels in testis.

The enzyme catalyses aldehydo-D-ribose 5-phosphate = D-ribulose 5-phosphate. Its pathway is carbohydrate degradation; pentose phosphate pathway; D-ribose 5-phosphate from D-ribulose 5-phosphate (non-oxidative stage): step 1/1. The sequence is that of Ribose-5-phosphate isomerase (Rpia) from Mus musculus (Mouse).